The sequence spans 239 residues: Uridylate kinase (239 aa).

Residue 12–15 (KLSG) coordinates ATP. The segment at 20 to 25 (GDQGYG) is involved in allosteric activation by GTP. G54 provides a ligand contact to UMP. 2 residues coordinate ATP: G55 and R59. Residues D74 and 135-142 (TGNPYFTT) each bind UMP. ATP is bound by residues T162, Y168, and D171.

This sequence belongs to the UMP kinase family. As to quaternary structure, homohexamer.

It localises to the cytoplasm. The catalysed reaction is UMP + ATP = UDP + ADP. The protein operates within pyrimidine metabolism; CTP biosynthesis via de novo pathway; UDP from UMP (UMPK route): step 1/1. Its activity is regulated as follows. Allosterically activated by GTP. Inhibited by UTP. Functionally, catalyzes the reversible phosphorylation of UMP to UDP. In Geobacter metallireducens (strain ATCC 53774 / DSM 7210 / GS-15), this protein is Uridylate kinase.